Here is a 104-residue protein sequence, read N- to C-terminus: uncharacterized protein (104 aa).

2 consecutive transmembrane segments (helical) span residues 45 to 65 (LYGI…IGVF) and 70 to 90 (LYLS…AKGL).

Its subcellular location is the membrane. This is an uncharacterized protein from Saccharomyces cerevisiae (strain ATCC 204508 / S288c) (Baker's yeast).